A 100-amino-acid chain; its full sequence is Urease subunit gamma (100 aa).

The protein belongs to the urease gamma subunit family. Heterotrimer of UreA (gamma), UreB (beta) and UreC (alpha) subunits. Three heterotrimers associate to form the active enzyme.

It localises to the cytoplasm. It catalyses the reaction urea + 2 H2O + H(+) = hydrogencarbonate + 2 NH4(+). Its pathway is nitrogen metabolism; urea degradation; CO(2) and NH(3) from urea (urease route): step 1/1. This is Urease subunit gamma from Staphylococcus epidermidis (strain ATCC 35984 / DSM 28319 / BCRC 17069 / CCUG 31568 / BM 3577 / RP62A).